Reading from the N-terminus, the 836-residue chain is Zinc fingers and homeoboxes protein 2 (836 aa).

The segment at 1–61 (MASKRKSTTP…EHSSKETEVV (61 aa)) is disordered. A compositionally biased stretch (polar residues) spans 8–19 (TTPCMVRTSQVL). An interaction with EFNB1 region spans residues 27–77 (ADRAKDKGAGMPQSDVTKDSWAAEPEHSSKETEVVEVKSMGENLSKKLQGG). A compositionally biased stretch (basic and acidic residues) spans 50–61 (EPEHSSKETEVV). Lys64 participates in a covalent cross-link: Glycyl lysine isopeptide (Lys-Gly) (interchain with G-Cter in SUMO2). C2H2-type zinc fingers lie at residues 78–101 (YECK…DMQH) and 110–133 (YVCA…SKFH). Residues 164–214 (PITASGPGSSDNDPGVSVGKTPMTKTGKLKADAKKVPKKPDEAAPENHMEG) form a disordered region. Residues 192-214 (LKADAKKVPKKPDEAAPENHMEG) show a composition bias toward basic and acidic residues. Residues 195-358 (DAKKVPKKPD…PAQLTPTKVS (164 aa)) are required for homodimerization. DNA-binding regions (homeobox) lie at residues 263-324 (NTTK…WSPE), 439-501 (TPAS…IVHI), 530-591 (PQKF…EQAV), and 628-690 (SPSS…TLSW). The segment at 263–446 (NTTKYNSALD…PLTPASDRKK (184 aa)) is required for repressor activity. A required for interaction with NFYA region spans residues 263–497 (NTTKYNSALD…SDHRYRCQRG (235 aa)). Residues 317-446 (HGISWSPEEV…PLTPASDRKK (130 aa)) are required for nuclear localization. The interval 404–442 (GQKRPLVTPQAAPEPKRPHIAQVPEPPPKVANTPLTPAS) is disordered. Lys455 participates in a covalent cross-link: Glycyl lysine isopeptide (Lys-Gly) (interchain with G-Cter in SUMO2). Basic and acidic residues-rich tracts occupy residues 699-709 (MSDDRGRDAVS), 730-746 (YAKD…EKLV), and 813-824 (RVAEGTVERADS). The segment at 699 to 836 (MSDDRGRDAV…DSTPAEAGQA (138 aa)) is disordered. Phosphoserine occurs at positions 824 and 826.

It belongs to the ZHX family. Homodimer (via homeobox domain 1). Heterodimer with ZHX1 (via homeobox domain 1). Heterodimer with ZHX3 (via homeobox domain 1). Heterodimerization with ZHX1 is not necessary for repressor activity. Interacts (via homeobox domain) with NFYA (via N-terminus). Interacts with EFNB1 intracellular domain peptide; the interaction enhances ZHX2 transcriptional repression activity. As to expression, expressed in retina where it localizes to Muller glial cells of the inner nuclear layer (at protein level). Detected in heart, brain, spleen, lung, liver, skeletal muscle, kidney and testis.

It is found in the nucleus. In terms of biological role, acts as a transcriptional repressor. Represses the promoter activity of the CDC25C gene stimulated by NFYA. May play a role in retinal development where it regulates the composition of bipolar cell populations, by promoting differentiation of bipolar OFF-type cells. In the brain, may promote maintenance and suppress differentiation of neural progenitor cells in the developing cortex. The chain is Zinc fingers and homeoboxes protein 2 (Zhx2) from Mus musculus (Mouse).